We begin with the raw amino-acid sequence, 179 residues long: ATP synthase subunit b (179 aa).

The helical transmembrane segment at 27–47 (TAITFLVMLAVLAKFAWGPIV) threads the bilayer.

It belongs to the ATPase B chain family. In terms of assembly, F-type ATPases have 2 components, F(1) - the catalytic core - and F(0) - the membrane proton channel. F(1) has five subunits: alpha(3), beta(3), gamma(1), delta(1), epsilon(1). F(0) has three main subunits: a(1), b(2) and c(10-14). The alpha and beta chains form an alternating ring which encloses part of the gamma chain. F(1) is attached to F(0) by a central stalk formed by the gamma and epsilon chains, while a peripheral stalk is formed by the delta and b chains.

It localises to the cell inner membrane. Its function is as follows. F(1)F(0) ATP synthase produces ATP from ADP in the presence of a proton or sodium gradient. F-type ATPases consist of two structural domains, F(1) containing the extramembraneous catalytic core and F(0) containing the membrane proton channel, linked together by a central stalk and a peripheral stalk. During catalysis, ATP synthesis in the catalytic domain of F(1) is coupled via a rotary mechanism of the central stalk subunits to proton translocation. Functionally, component of the F(0) channel, it forms part of the peripheral stalk, linking F(1) to F(0). This Anaeromyxobacter dehalogenans (strain 2CP-C) protein is ATP synthase subunit b.